The chain runs to 268 residues: Protein atz-1 (268 aa).

A coiled-coil region spans residues 171-243; it reads VDDANKLTEV…EEGEEDYEEE (73 aa). Residues 229-268 form a disordered region; it reads DLMKEEEGEEDYEEEENYEVEEDFEDEEEYDEEGEEEDYE. Residues 231–268 show a composition bias toward acidic residues; it reads MKEEEGEEDYEEEENYEVEEDFEDEEEYDEEGEEEDYE.

It is found in the nucleus. Its function is as follows. Plays a role in meiosis, germline development and oocyte morphogenesis. May play a role in DNA replication. In the germline, involved in the maintenance of transition zone nuclei and in chromosome structure and organization, but not required for mitotic proliferation. This chain is Protein atz-1, found in Caenorhabditis elegans.